We begin with the raw amino-acid sequence, 195 residues long: PABIR family member 1 (195 aa).

This sequence belongs to the FAM122 family.

The sequence is that of PABIR family member 1 from Homo sapiens (Human).